A 557-amino-acid chain; its full sequence is Suprabasin (557 aa).

An N-terminal signal peptide occupies residues 1 to 23 (MHLASLLSSCSLLLLLGALPGWA). Disordered regions lie at residues 150-175 (RFGQGAHHATGQAGKEAEKFGQGAHH), 422-441 (GQGAHHAAEQAGKQAGKVAQ), 464-490 (AAGQAGKEAEKLGQGVHHAAGQAGKQE), and 509-533 (NQLLNDGHPGGSTTQHGGAATTTLT). The span at 153-175 (QGAHHATGQAGKEAEKFGQGAHH) shows a compositional bias: low complexity. A compositionally biased stretch (low complexity) spans 476 to 487 (GQGVHHAAGQAG).

It localises to the secreted. The polypeptide is Suprabasin (SBSN) (Bos taurus (Bovine)).